We begin with the raw amino-acid sequence, 397 residues long: F-box protein At5g25290 (397 aa).

The F-box domain maps to 11-56 (VTLWSEIPMDILRSVFERLSFVDLHRAKIVCSHWYSCSKQSFLRKT).

This chain is F-box protein At5g25290, found in Arabidopsis thaliana (Mouse-ear cress).